We begin with the raw amino-acid sequence, 475 residues long: Ornithine aminotransferase, mitochondrial (475 aa).

A mitochondrion-targeting transit peptide spans M1–F16. Residues R23–L43 are disordered. The span at P29–Q41 shows a compositional bias: low complexity. Residues G142–A143 and F177 contribute to the pyridoxal 5'-phosphate site. R180 provides a ligand contact to L-ornithine. D265–Q268 provides a ligand contact to pyridoxal 5'-phosphate. An N6-(pyridoxal phosphate)lysine modification is found at K294. S323 provides a ligand contact to L-ornithine. T324 serves as a coordination point for pyridoxal 5'-phosphate.

The protein belongs to the class-III pyridoxal-phosphate-dependent aminotransferase family. As to quaternary structure, homotetramer. Pyridoxal 5'-phosphate is required as a cofactor.

The protein localises to the mitochondrion matrix. It carries out the reaction a 2-oxocarboxylate + L-ornithine = L-glutamate 5-semialdehyde + an L-alpha-amino acid. Its pathway is amino-acid biosynthesis; L-proline biosynthesis; L-glutamate 5-semialdehyde from L-ornithine: step 1/1. In terms of biological role, mediates degradation of arginine for nitrogen recycling. Plays a role in non-host disease resistance by regulating pyrroline-5-carboxylate metabolism-induced hypersensitive response. The sequence is that of Ornithine aminotransferase, mitochondrial from Arabidopsis thaliana (Mouse-ear cress).